The following is a 786-amino-acid chain: Phenylalanine--tRNA ligase beta subunit (786 aa).

The tRNA-binding domain occupies 39–150; the sequence is LRAPDRVVVG…GELKLGKPLH (112 aa). One can recognise a B5 domain in the interval 397–474; sequence YKPATITVDL…RLLGIDTILA (78 aa). Residues aspartate 452, aspartate 458, glutamate 461, and glutamate 462 each coordinate Mg(2+). One can recognise an FDX-ACB domain in the interval 693 to 786; sequence SKFPKLQRDL…LNHRFGAKLR (94 aa).

The protein belongs to the phenylalanyl-tRNA synthetase beta subunit family. Type 1 subfamily. Tetramer of two alpha and two beta subunits. Requires Mg(2+) as cofactor.

It is found in the cytoplasm. It carries out the reaction tRNA(Phe) + L-phenylalanine + ATP = L-phenylalanyl-tRNA(Phe) + AMP + diphosphate + H(+). The sequence is that of Phenylalanine--tRNA ligase beta subunit from Wolinella succinogenes (strain ATCC 29543 / DSM 1740 / CCUG 13145 / JCM 31913 / LMG 7466 / NCTC 11488 / FDC 602W) (Vibrio succinogenes).